The chain runs to 417 residues: NADH-quinone oxidoreductase subunit D (417 aa).

Belongs to the complex I 49 kDa subunit family. In terms of assembly, NDH-1 is composed of 14 different subunits. Subunits NuoB, C, D, E, F, and G constitute the peripheral sector of the complex.

It localises to the cell inner membrane. It carries out the reaction a quinone + NADH + 5 H(+)(in) = a quinol + NAD(+) + 4 H(+)(out). NDH-1 shuttles electrons from NADH, via FMN and iron-sulfur (Fe-S) centers, to quinones in the respiratory chain. The immediate electron acceptor for the enzyme in this species is believed to be ubiquinone. Couples the redox reaction to proton translocation (for every two electrons transferred, four hydrogen ions are translocated across the cytoplasmic membrane), and thus conserves the redox energy in a proton gradient. In Halorhodospira halophila (strain DSM 244 / SL1) (Ectothiorhodospira halophila (strain DSM 244 / SL1)), this protein is NADH-quinone oxidoreductase subunit D.